The primary structure comprises 77 residues: Acyl carrier protein (77 aa).

A Carrier domain is found at 2–77 (SSIDKRIKEI…DAIDYITDHT (76 aa)). O-(pantetheine 4'-phosphoryl)serine is present on S37.

This sequence belongs to the acyl carrier protein (ACP) family. Post-translationally, 4'-phosphopantetheine is transferred from CoA to a specific serine of apo-ACP by AcpS. This modification is essential for activity because fatty acids are bound in thioester linkage to the sulfhydryl of the prosthetic group.

Its subcellular location is the cytoplasm. The protein operates within lipid metabolism; fatty acid biosynthesis. Carrier of the growing fatty acid chain in fatty acid biosynthesis. This is Acyl carrier protein from Geotalea daltonii (strain DSM 22248 / JCM 15807 / FRC-32) (Geobacter daltonii).